Reading from the N-terminus, the 264-residue chain is Virulence plasmid protein pGP3-D (264 aa).

This is Virulence plasmid protein pGP3-D from Chlamydia trachomatis serovar L2 (strain ATCC VR-902B / DSM 19102 / 434/Bu).